The following is a 302-amino-acid chain: Recombination-associated protein RdgC (302 aa).

This sequence belongs to the RdgC family.

The protein localises to the cytoplasm. It localises to the nucleoid. May be involved in recombination. The chain is Recombination-associated protein RdgC from Actinobacillus pleuropneumoniae serotype 3 (strain JL03).